We begin with the raw amino-acid sequence, 224 residues long: Ribosomal RNA small subunit methyltransferase G (224 aa).

S-adenosyl-L-methionine contacts are provided by residues Gly69, Leu74, 119 to 120 (AE), and Arg137.

Belongs to the methyltransferase superfamily. RNA methyltransferase RsmG family.

The protein resides in the cytoplasm. Specifically methylates the N7 position of guanine in position 518 of 16S rRNA. This chain is Ribosomal RNA small subunit methyltransferase G, found in Mycobacterium bovis (strain ATCC BAA-935 / AF2122/97).